Reading from the N-terminus, the 233-residue chain is UPF0502 protein YPTS_2082 (233 aa).

The protein belongs to the UPF0502 family.

This is UPF0502 protein YPTS_2082 from Yersinia pseudotuberculosis serotype IB (strain PB1/+).